The following is a 316-amino-acid chain: Methionyl-tRNA formyltransferase (316 aa).

112-115 (SLLP) contacts (6S)-5,6,7,8-tetrahydrofolate.

It belongs to the Fmt family.

It catalyses the reaction L-methionyl-tRNA(fMet) + (6R)-10-formyltetrahydrofolate = N-formyl-L-methionyl-tRNA(fMet) + (6S)-5,6,7,8-tetrahydrofolate + H(+). Functionally, attaches a formyl group to the free amino group of methionyl-tRNA(fMet). The formyl group appears to play a dual role in the initiator identity of N-formylmethionyl-tRNA by promoting its recognition by IF2 and preventing the misappropriation of this tRNA by the elongation apparatus. The chain is Methionyl-tRNA formyltransferase from Trichlorobacter lovleyi (strain ATCC BAA-1151 / DSM 17278 / SZ) (Geobacter lovleyi).